A 308-amino-acid chain; its full sequence is Aspartate carbamoyltransferase catalytic subunit (308 aa).

Residues arginine 57 and threonine 58 each contribute to the carbamoyl phosphate site. Lysine 86 contributes to the L-aspartate binding site. Carbamoyl phosphate contacts are provided by arginine 107, histidine 135, and glutamine 138. Positions 167 and 228 each coordinate L-aspartate. Residues leucine 267 and proline 268 each contribute to the carbamoyl phosphate site.

This sequence belongs to the aspartate/ornithine carbamoyltransferase superfamily. ATCase family. In terms of assembly, heterooligomer of catalytic and regulatory chains.

It catalyses the reaction carbamoyl phosphate + L-aspartate = N-carbamoyl-L-aspartate + phosphate + H(+). The protein operates within pyrimidine metabolism; UMP biosynthesis via de novo pathway; (S)-dihydroorotate from bicarbonate: step 2/3. Catalyzes the condensation of carbamoyl phosphate and aspartate to form carbamoyl aspartate and inorganic phosphate, the committed step in the de novo pyrimidine nucleotide biosynthesis pathway. This chain is Aspartate carbamoyltransferase catalytic subunit, found in Methanosarcina barkeri (strain Fusaro / DSM 804).